The primary structure comprises 314 residues: Porphobilinogen deaminase (314 aa).

C234 is subject to S-(dipyrrolylmethanemethyl)cysteine.

Belongs to the HMBS family. As to quaternary structure, monomer. Dipyrromethane is required as a cofactor.

It catalyses the reaction 4 porphobilinogen + H2O = hydroxymethylbilane + 4 NH4(+). The protein operates within porphyrin-containing compound metabolism; protoporphyrin-IX biosynthesis; coproporphyrinogen-III from 5-aminolevulinate: step 2/4. In terms of biological role, tetrapolymerization of the monopyrrole PBG into the hydroxymethylbilane pre-uroporphyrinogen in several discrete steps. The protein is Porphobilinogen deaminase of Mycobacterium ulcerans (strain Agy99).